The chain runs to 260 residues: Small ribosomal subunit protein uS2 (260 aa).

Belongs to the universal ribosomal protein uS2 family.

This chain is Small ribosomal subunit protein uS2, found in Mesorhizobium japonicum (strain LMG 29417 / CECT 9101 / MAFF 303099) (Mesorhizobium loti (strain MAFF 303099)).